The primary structure comprises 252 residues: Imidazole glycerol phosphate synthase subunit HisF (252 aa).

Active-site residues include Asp11 and Asp130.

The protein belongs to the HisA/HisF family. In terms of assembly, heterodimer of HisH and HisF.

Its subcellular location is the cytoplasm. The enzyme catalyses 5-[(5-phospho-1-deoxy-D-ribulos-1-ylimino)methylamino]-1-(5-phospho-beta-D-ribosyl)imidazole-4-carboxamide + L-glutamine = D-erythro-1-(imidazol-4-yl)glycerol 3-phosphate + 5-amino-1-(5-phospho-beta-D-ribosyl)imidazole-4-carboxamide + L-glutamate + H(+). Its pathway is amino-acid biosynthesis; L-histidine biosynthesis; L-histidine from 5-phospho-alpha-D-ribose 1-diphosphate: step 5/9. In terms of biological role, IGPS catalyzes the conversion of PRFAR and glutamine to IGP, AICAR and glutamate. The HisF subunit catalyzes the cyclization activity that produces IGP and AICAR from PRFAR using the ammonia provided by the HisH subunit. The polypeptide is Imidazole glycerol phosphate synthase subunit HisF (Acinetobacter baumannii (strain AB307-0294)).